An 815-amino-acid chain; its full sequence is uncharacterized protein (815 aa).

Disordered regions lie at residues 123 to 183, 249 to 274, 592 to 668, and 765 to 815; these read QSNT…QPST, NVNN…NNTN, IKQN…NLNS, and NNEE…EEIK. Composition is skewed to polar residues over residues 135-154 and 174-183; these read SIIT…TSTT and DSITVLQPST. Low complexity predominate over residues 595–611; sequence NGSSSSNNNSKLSSTNS. Residues 612 to 639 show a composition bias toward polar residues; the sequence is GQTSDNPINSSNGGQSIKKQGSNLSLNR. Positions 640 to 668 are enriched in low complexity; that stretch reads QQSSTKLNNQSNNNNNNNANTTNQNNLNS. Basic and acidic residues predominate over residues 765–782; sequence NNEEHNNNNKENNNENNK. Low complexity predominate over residues 783–809; the sequence is ENINNNNNIINNNNDNNCNENNNNCNE.

This is an uncharacterized protein from Dictyostelium discoideum (Social amoeba).